The chain runs to 407 residues: Putative glucose/galactose transporter (407 aa).

12 consecutive transmembrane segments (helical) span residues 11–31 (GSLTALFFLMGFITVLNDILI), 47–67 (LIQFCFFGAYFIMGGVFGNVI), 70–90 (IGYPFGVVLGFVITATGCALF), 96–116 (FGSYGFFLGALFILASGIVCL), 139–159 (VQAFNSLGTTLGPIFGSLLIF), 180–200 (VQMPYLGLAVFSLLLALIMYL), 225–245 (FVFGALGIFFYVGGEVAIGSF), 263–283 (HYLVYYWGGAMVGRFLGSVLM), 300–320 (IVLIALAIIIGGKIALFALTF), 321–341 (VGFFNSIMFPTIFSLATLNLG), 349–369 (GVISMAIVGGALIPPIQGAVT), and 378–398 (NLLYAYGVPLLCYFYILFFAL).

This sequence belongs to the major facilitator superfamily. FHS transporter (TC 2.A.1.7) family.

Its subcellular location is the cell inner membrane. Intake of glucose and galactose. In Helicobacter pylori (strain ATCC 700392 / 26695) (Campylobacter pylori), this protein is Putative glucose/galactose transporter (gluP).